A 137-amino-acid polypeptide reads, in one-letter code: Large ribosomal subunit protein uL16 (137 aa).

Belongs to the universal ribosomal protein uL16 family. Part of the 50S ribosomal subunit.

In terms of biological role, binds 23S rRNA and is also seen to make contacts with the A and possibly P site tRNAs. The protein is Large ribosomal subunit protein uL16 of Methylocella silvestris (strain DSM 15510 / CIP 108128 / LMG 27833 / NCIMB 13906 / BL2).